The chain runs to 1068 residues: Rho family-interacting cell polarization regulator 2 (1068 aa).

Phosphoserine; in isoform is present on residues Ser-21 and Ser-37. The interval 45–73 (LKKPQAKLKKMHNLGHKNNNPPKEPQPKR) is disordered. Positions 48-59 (PQAKLKKMHNLG) are enriched in basic residues. An involved in cell filopodia formation region spans residues 55 to 113 (MHNLGHKNNNPPKEPQPKRVEEVYRALKNGLDEYLEVHQTELDKLTAQLKDMKRNSRLG). The stretch at 83-112 (NGLDEYLEVHQTELDKLTAQLKDMKRNSRL) forms a coiled coil. Phosphoserine; in isoform 2 is present on Ser-341. The span at 474-491 (QNEGMDDTSSASSRNSLG) shows a compositional bias: polar residues. The interval 474–524 (QNEGMDDTSSASSRNSLGEGQEPKSHLKEEDPEEPRKPASAPSEACRRQSS) is disordered. The segment covering 494–510 (QEPKSHLKEEDPEEPRK) has biased composition (basic and acidic residues). Residue Ser-523 is modified to Phosphoserine; in isoform 2. Phosphoserine is present on Ser-573. Residue Ser-585 is modified to Phosphoserine; in isoform 2. Positions 768 to 793 (VARSLLEKLSRQIQVMEKLAAVSDEN) form a coiled coil.

It belongs to the RIPOR family. Homooligomer; homooligomerization is regulated by RHOC and leads to the formation of concatemers through the association of N- and C-termini. Interacts with 14-3-3 proteins; these interactions occur during myogenic cell differentiation. Interacts with HDAC6; this interaction occurs during early myogenic differentiation and prevents HDAC6 to deacetylate tubulin. Interacts with DYSF; this interaction occurs during early myogenic differentiation. Interacts with MYOF. Interacts with RHOC. Isoform 1 and isoform 2 interact (via active GTP- or inactive GDP-bound forms) with RHOA; these interactions are direct, block the loading of GTP to RHOA and decrease upon chemokine CCL19 stimulation in primary T lymphocytes. Isoform 2 interacts (phosphorylated form) with HDAC6; this interaction induces T cell proliferation arrest. Isoform 2 interacts (phosphorylated form) with 14-3-3 proteins; these interactions induces T cell proliferation arrest. Isoform 2 interacts with 14-3-3 proteins. Isoform 2 interacts (via phosphorylated form) with YWHAB; this interaction occurs in a chemokine-dependent manner and does not compete for binding of RIPOR2 with RHOA nor blocks inhibition of RIPOR2-mediated RHOA activity. Isoform 2 interacts with YWHAE. Isoform 2 interacts with YWHAQ. Phosphorylated. Isoform 2 is phosphorylated in T cells. Chemokine-induced phosphorylation of isoform 2 in neutrophils occurs in a PKC- and AKT-dependent manner, resulting in RIPOR2 interaction with YWHAB and stabilization. Isoform 2 is phosphorylated by PKCA, AKT1 and MAPKAPK1A; in vitro. In terms of processing, acetylated during myogenic differentiation. In terms of tissue distribution, expressed in primary fetal mononuclear myoblast. Expressed strongly in naive T lymphocytes. Expressed weakly in activated T lymphocytes (at protein level). Expressed in blood cells and adult tissues of hematopoietic origin, such as the secondary lymphoid organs. Expressed in cytotrophoblast.

The protein localises to the cytoplasm. The protein resides in the cytoskeleton. It localises to the cell projection. It is found in the filopodium. Its subcellular location is the stereocilium. The protein localises to the stereocilium membrane. The protein resides in the apical cell membrane. Its function is as follows. Acts as an inhibitor of the small GTPase RHOA and plays several roles in the regulation of myoblast and hair cell differentiation, lymphocyte T proliferation and neutrophil polarization. Inhibits chemokine-induced T lymphocyte responses, such as cell adhesion, polarization and migration. Involved also in the regulation of neutrophil polarization, chemotaxis and adhesion. Required for normal development of inner and outer hair cell stereocilia within the cochlea of the inner ear. Plays a role for maintaining the structural organization of the basal domain of stereocilia. Involved in mechanosensory hair cell function. Required for normal hearing. Functionally, acts as an inhibitor of the small GTPase RHOA. Plays a role in fetal mononuclear myoblast differentiation by promoting filopodia and myotube formation. Maintains naive T lymphocytes in a quiescent state. This is Rho family-interacting cell polarization regulator 2 (RIPOR2) from Homo sapiens (Human).